A 223-amino-acid polypeptide reads, in one-letter code: MEVQKEAQRIMTLSVWKMYHSRMQRGGLRLHRSLQLSLVMRSARELYLSAKVEALEPEVSLPAALPSDPRLHPPREAESTAETATPDGEHPFPEPMDTQEAPTAEETSACCAPRPAKVSRKRRSSSLSDGGDAGLVPSKKARLEEKEEEEGASSEVADRLQPPPAQAEGAFPNLARVLQRRFSGLLNCSPAAPPTAPPACEAKPACRPADSMLNVLVRAVVAF.

Met-1 is modified (N-acetylmethionine). A disordered region spans residues 63 to 172 (AALPSDPRLH…PPAQAEGAFP (110 aa)). Basic and acidic residues predominate over residues 69 to 78 (PRLHPPREAE). The span at 125–138 (SSLSDGGDAGLVPS) shows a compositional bias: low complexity.

This sequence belongs to the IER family. Expressed in activated T-cells (at protein level). Expression increases in metastatic tumor cells (at protein level).

Its subcellular location is the cytoplasm. It is found in the nucleus. DNA-binding protein that seems to act as a transcription factor. Involved in the regulation of neuronal differentiation, acts upon JNK-signaling pathway activation and plays a role in neurite outgrowth in hippocampal cells. May mediate with FIBP FGF-signaling in the establishment of laterality in the embryo. Promotes cell motility, seems to stimulate tumor metastasis. This chain is Immediate early response gene 2 protein, found in Homo sapiens (Human).